The primary structure comprises 229 residues: Small ribosomal subunit protein uS3 (229 aa).

The KH type-2 domain maps to 39–107; that stretch reads IRKFLKKELY…EVFINIKEEK (69 aa).

It belongs to the universal ribosomal protein uS3 family. Part of the 30S ribosomal subunit. Forms a tight complex with proteins S10 and S14.

Functionally, binds the lower part of the 30S subunit head. Binds mRNA in the 70S ribosome, positioning it for translation. This Nitratiruptor sp. (strain SB155-2) protein is Small ribosomal subunit protein uS3.